The sequence spans 398 residues: Carbamoyl phosphate synthase small chain (398 aa).

Residues 1 to 204 are CPSase; the sequence is MSPLLPSFPP…PAYGTLDTGK (204 aa). L-glutamine contacts are provided by Ser53, Gly256, and Gly258. The Glutamine amidotransferase type-1 domain maps to 208–395; sequence KVVAYDFGVK…VELMNAASKK (188 aa). Cys284 (nucleophile) is an active-site residue. Residues Leu285, Gln288, Asn326, Gly328, and Phe329 each coordinate L-glutamine. Catalysis depends on residues His368 and Glu370.

The protein belongs to the CarA family. In terms of assembly, composed of two chains; the small (or glutamine) chain promotes the hydrolysis of glutamine to ammonia, which is used by the large (or ammonia) chain to synthesize carbamoyl phosphate. Tetramer of heterodimers (alpha,beta)4.

It catalyses the reaction hydrogencarbonate + L-glutamine + 2 ATP + H2O = carbamoyl phosphate + L-glutamate + 2 ADP + phosphate + 2 H(+). The enzyme catalyses L-glutamine + H2O = L-glutamate + NH4(+). Its pathway is amino-acid biosynthesis; L-arginine biosynthesis; carbamoyl phosphate from bicarbonate: step 1/1. The protein operates within pyrimidine metabolism; UMP biosynthesis via de novo pathway; (S)-dihydroorotate from bicarbonate: step 1/3. Functionally, small subunit of the glutamine-dependent carbamoyl phosphate synthetase (CPSase). CPSase catalyzes the formation of carbamoyl phosphate from the ammonia moiety of glutamine, carbonate, and phosphate donated by ATP, constituting the first step of 2 biosynthetic pathways, one leading to arginine and/or urea and the other to pyrimidine nucleotides. The small subunit (glutamine amidotransferase) binds and cleaves glutamine to supply the large subunit with the substrate ammonia. This chain is Carbamoyl phosphate synthase small chain, found in Polynucleobacter necessarius subsp. necessarius (strain STIR1).